We begin with the raw amino-acid sequence, 226 residues long: ATP synthase F(0) complex subunit a (226 aa).

The next 6 helical transmembrane spans lie at 6 to 26 (FASF…IIMF), 68 to 88 (WSLM…LGLL), 97 to 117 (QLSM…FTGF), 136 to 156 (LLIP…PVAL), 164 to 184 (ITAG…LLNI), and 189 to 209 (AFIT…VALI).

The protein belongs to the ATPase A chain family. As to quaternary structure, component of the ATP synthase complex composed at least of ATP5F1A/subunit alpha, ATP5F1B/subunit beta, ATP5MC1/subunit c (homooctomer), MT-ATP6/subunit a, MT-ATP8/subunit 8, ATP5ME/subunit e, ATP5MF/subunit f, ATP5MG/subunit g, ATP5MK/subunit k, ATP5MJ/subunit j, ATP5F1C/subunit gamma, ATP5F1D/subunit delta, ATP5F1E/subunit epsilon, ATP5PF/subunit F6, ATP5PB/subunit b, ATP5PD/subunit d, ATP5PO/subunit OSCP. ATP synthase complex consists of a soluble F(1) head domain (subunits alpha(3) and beta(3)) - the catalytic core - and a membrane F(0) domain - the membrane proton channel (subunits c, a, 8, e, f, g, k and j). These two domains are linked by a central stalk (subunits gamma, delta, and epsilon) rotating inside the F1 region and a stationary peripheral stalk (subunits F6, b, d, and OSCP). Interacts with DNAJC30; interaction is direct.

The protein resides in the mitochondrion inner membrane. It catalyses the reaction H(+)(in) = H(+)(out). Subunit a, of the mitochondrial membrane ATP synthase complex (F(1)F(0) ATP synthase or Complex V) that produces ATP from ADP in the presence of a proton gradient across the membrane which is generated by electron transport complexes of the respiratory chain. ATP synthase complex consist of a soluble F(1) head domain - the catalytic core - and a membrane F(1) domain - the membrane proton channel. These two domains are linked by a central stalk rotating inside the F(1) region and a stationary peripheral stalk. During catalysis, ATP synthesis in the catalytic domain of F(1) is coupled via a rotary mechanism of the central stalk subunits to proton translocation. With the subunit c (ATP5MC1), forms the proton-conducting channel in the F(0) domain, that contains two crucial half-channels (inlet and outlet) that facilitate proton movement from the mitochondrial intermembrane space (IMS) into the matrix. Protons are taken up via the inlet half-channel and released through the outlet half-channel, following a Grotthuss mechanism. The polypeptide is ATP synthase F(0) complex subunit a (Sus scrofa (Pig)).